Consider the following 512-residue polypeptide: GMP synthase [glutamine-hydrolyzing] (512 aa).

Positions 5–195 (GIVILDFGSQ…IFGIAKAEKN (191 aa)) constitute a Glutamine amidotransferase type-1 domain. Catalysis depends on C82, which acts as the Nucleophile. Residues H169 and E171 contribute to the active site. Residues 196-387 (WSMENYIEST…LGIPDYMVDR (192 aa)) enclose the GMPS ATP-PPase domain. An ATP-binding site is contributed by 223 to 229 (SGGVDSS).

Homodimer.

The enzyme catalyses XMP + L-glutamine + ATP + H2O = GMP + L-glutamate + AMP + diphosphate + 2 H(+). Its pathway is purine metabolism; GMP biosynthesis; GMP from XMP (L-Gln route): step 1/1. Its function is as follows. Catalyzes the synthesis of GMP from XMP. This Fusobacterium nucleatum subsp. nucleatum (strain ATCC 25586 / DSM 15643 / BCRC 10681 / CIP 101130 / JCM 8532 / KCTC 2640 / LMG 13131 / VPI 4355) protein is GMP synthase [glutamine-hydrolyzing].